The primary structure comprises 262 residues: 14-3-3 protein I (262 aa).

This sequence belongs to the 14-3-3 family. As to quaternary structure, homodimer. Forms a complex composed of CDPK1, PKA regulatory subunit PKAr and 14-3-3I; the complex is formed in merozoites in response to low extracellular level of K(+) and may play a role in microneme secretion. Interacts with CDPK1 (when phosphorylated) in a Ca(2+)-independent manner; the interaction does not regulate CDPK1 catalytic activity but is required for merozoite invasion of host erythrocytes. Interacts with PKA regulatory subunit PKAr (when phosphorylated) in a Ca(2+)-dependent manner. Interacts with histone H3 (when phosphorylated at 'Ser-28' or when phosphorylated at 'Ser-28' and 'Ser-32').

The protein localises to the cell membrane. The protein resides in the cytoplasm. Its subcellular location is the nucleus. Adapter protein which binds to its partners, usually via a phosphoserine or phosphothreonine motif. Binding generally results in the modulation of the activity and/or cellular localization of the binding partner. Via its interaction with CDPK1 and PKAr, involved in merozoite microneme secretion and thus in merozoite invasion of host erythrocytes. This chain is 14-3-3 protein I, found in Plasmodium falciparum (isolate 3D7).